Here is a 238-residue protein sequence, read N- to C-terminus: MAQQQMTSSQKALMLELKSLQEEPVEGFRITLVDESDLYNWEVAIFGPPNTLYEGGYFKAHIKFPIDYPYSPPTFRFLTKMWHPNIYENGDVCISILHPPVDDPQSGELPSERWNPTQNVRTILLSVISLLNEPNTFSPANVDASVMFRKWRDSKGKDKEYAEIIRKQVSATKAEAEKDGVKVPTTLAEYCIKTKVPSNDNSSDLLYDDLYDDDIDDEDEEEEDADCYDDDDSGNEES.

One can recognise a UBC core domain in the interval 8–174 (SSQKALMLEL…IRKQVSATKA (167 aa)). The active-site Glycyl thioester intermediate is Cys93. The tract at residues 98-113 (HPPVDDPQSGELPSER) is important for ubiquitin transfer. A disordered region spans residues 194–238 (TKVPSNDNSSDLLYDDLYDDDIDDEDEEEEDADCYDDDDSGNEES). Residues 206–238 (LYDDLYDDDIDDEDEEEEDADCYDDDDSGNEES) are compositionally biased toward acidic residues. The residue at position 233 (Ser233) is a Phosphoserine; by CK2.

The protein belongs to the ubiquitin-conjugating enzyme family. As to quaternary structure, interacts with multiple Cul1-RING E3 ubiquitin-protein ligase complexes, also known as SCF (SKP1-CUL1-F-box protein) complexes, including SCF(FBXW7) and SCF(BTRC). Interacts with multiple Cul2-RING (CRL2) E3 ubiquitin-protein ligase complexes, also known as ECS (Elongin BC-CUL2/5-SOCS-box protein) complexes, including CRL2(FEM1C) and ECS(VHL). When phosphorylated, interacts with beta-TrCP (BTRC).

It catalyses the reaction S-ubiquitinyl-[E1 ubiquitin-activating enzyme]-L-cysteine + [E2 ubiquitin-conjugating enzyme]-L-cysteine = [E1 ubiquitin-activating enzyme]-L-cysteine + S-ubiquitinyl-[E2 ubiquitin-conjugating enzyme]-L-cysteine.. Its pathway is protein modification; protein ubiquitination. Neddylation of CUL2 in the CRL2(FEM1C) E3 ligase complex increases substrate affinity of UBE2R2 and the ubiquitin-transfer rate in the E2-E3 complex. E2 ubiquitin-conjugating enzyme that accepts ubiquitin from an E1 ubiquitin-activating protein, and catalyzes its covalent attachment to other proteins by an E3 ubiquitin-protein ligase complex. In vitro catalyzes monoubiquitination and 'Lys-48'-linked polyubiquitination. Works in collaboration with various Cul1-RING and Cul2-RING E3 ligase complexes. May be involved in degradation of katenin. This Homo sapiens (Human) protein is Ubiquitin-conjugating enzyme E2 R2 (UBE2R2).